We begin with the raw amino-acid sequence, 85 residues long: Homeobox protein knotted-1-like 4 (85 aa).

The 21-residue stretch at 1-21 folds into the ELK domain; that stretch reads ELKYQLLKKYSGYLSSLRQEF. Residues 22–85 constitute a DNA-binding region (homeobox; TALE-type); sequence SKKKKKGKLP…NQRKRHWKPS (64 aa).

It belongs to the TALE/KNOX homeobox family. In terms of tissue distribution, strongly expressed in ear inflorescence primordia and shoot meristem. Weakly expressed in embryos. Absent from leaves.

It is found in the nucleus. In terms of biological role, probably binds to the DNA sequence 5'-TGAC-3'. The chain is Homeobox protein knotted-1-like 4 (KNOX4) from Zea mays (Maize).